The chain runs to 493 residues: MQSLSQLGPSEIFLVARREKPSTRAQLWFTGRLSFRQETNGIRLKNRVEFSPRPVPPNLIAAEKEEAKAVLTLFFKKQGLSNSLSSRLINKSDLFIDHLVSRLHSVHKARYLVGRELTTLEIRDSLIPYLEQLHEEHGDLLAELVVSFPDPPAEPRLVASSPVSVLPPRGDTDSAADTRKLRAVSRVSELDTEGALRPQTLYLLDLGLNLEQIKTITRKFAAFPYYSLDGKIKPVVEFLLDLGIPKSDIPTILCKRPQICGISLTDNLKPTMAFLETLGIDKNQWAKIISRFPAILTYSRQKLTSTVEFLSQTGLTEEQIGRILTRCPNIMSYSVEDKLRPTMEYFRSLNVDVAVLLHRCPQTFGLSIESNLKPVTEFFLEKGFGLDEIGIMISRYGALYTFSLKENVMPKWDYFQTMDYPKSELVKFPQFFGYSLQERIKPRYELVQRSGVRLLLNQVLSLSGIEFEKVVKKKMMKLVSNNVIAEQSSGGLL.

Residues 1 to 43 (MQSLSQLGPSEIFLVARREKPSTRAQLWFTGRLSFRQETNGIR) constitute a chloroplast transit peptide.

Belongs to the mTERF family. Interacts with pTAC6. In terms of tissue distribution, expressed in roots, rosette leaves, cauline leaves, stems, flower buds and open flowers.

The protein localises to the plastid. It localises to the chloroplast. Transcription termination factor required for processing and steady-state levels of plastid transcripts. Involved also in chloroplast transcriptional pausing, a general feature of chloroplast genes. Specifically and positively regulates the transcription of chloroplast psbEFLJ encoding for photosystem II (PSII) core subunits psbE, psbF, psbL and psbJ; causes the plastid-encoded RNA polymerase (PEP) complex to pause at psbEFLJ by binding to the +30 to +51 region of double-stranded DNA, and recruits additional pTAC6 to the transcriptionally paused region of psbEFLJ. May play a role in response to abiotic stresses. This is Transcription termination factor MTERF5, chloroplastic from Arabidopsis thaliana (Mouse-ear cress).